The chain runs to 165 residues: Lipoprotein signal peptidase (165 aa).

Transmembrane regions (helical) follow at residues tryptophan 12 to glutamine 32, tryptophan 70 to alanine 90, and alanine 102 to valine 122. Active-site residues include aspartate 123 and aspartate 141. Residues phenylalanine 137–leucine 157 traverse the membrane as a helical segment.

This sequence belongs to the peptidase A8 family.

The protein localises to the cell inner membrane. It carries out the reaction Release of signal peptides from bacterial membrane prolipoproteins. Hydrolyzes -Xaa-Yaa-Zaa-|-(S,diacylglyceryl)Cys-, in which Xaa is hydrophobic (preferably Leu), and Yaa (Ala or Ser) and Zaa (Gly or Ala) have small, neutral side chains.. The protein operates within protein modification; lipoprotein biosynthesis (signal peptide cleavage). This protein specifically catalyzes the removal of signal peptides from prolipoproteins. The protein is Lipoprotein signal peptidase of Cronobacter sakazakii (strain ATCC BAA-894) (Enterobacter sakazakii).